The following is a 404-amino-acid chain: Glucose-1-phosphate adenylyltransferase (404 aa).

Residues Y99, G164, 179 to 180 (EK), and S197 each bind alpha-D-glucose 1-phosphate.

This sequence belongs to the bacterial/plant glucose-1-phosphate adenylyltransferase family.

The enzyme catalyses alpha-D-glucose 1-phosphate + ATP + H(+) = ADP-alpha-D-glucose + diphosphate. The protein operates within glycan biosynthesis; glycogen biosynthesis. Its function is as follows. Involved in the biosynthesis of ADP-glucose, a building block, required in the biosynthesis of maltose-1-phosphate (M1P) and in the elongation reactions to produce linear alpha-1,4-glucans. Catalyzes the reaction between ATP and alpha-D-glucose 1-phosphate (G1P) to produce pyrophosphate and ADP-Glc. This Mycolicibacterium vanbaalenii (strain DSM 7251 / JCM 13017 / BCRC 16820 / KCTC 9966 / NRRL B-24157 / PYR-1) (Mycobacterium vanbaalenii) protein is Glucose-1-phosphate adenylyltransferase.